A 209-amino-acid polypeptide reads, in one-letter code: Probable GTP-binding protein EngB (209 aa).

The 192-residue stretch at 12–203 (VSFEIIFVGR…RDRLHEMKRD (192 aa)) folds into the EngB-type G domain. GTP is bound by residues 20-27 (GRSNVGKS), 45-49 (GVTLR), 62-65 (DMPG), 142-145 (NKMD), and 179-181 (ISA). The Mg(2+) site is built by serine 27 and threonine 47.

This sequence belongs to the TRAFAC class TrmE-Era-EngA-EngB-Septin-like GTPase superfamily. EngB GTPase family. The cofactor is Mg(2+).

In terms of biological role, necessary for normal cell division and for the maintenance of normal septation. The sequence is that of Probable GTP-binding protein EngB from Methanosarcina barkeri (strain Fusaro / DSM 804).